The sequence spans 1359 residues: DNA-directed RNA polymerase subunit beta (1359 aa).

Belongs to the RNA polymerase beta chain family. The RNAP catalytic core consists of 2 alpha, 1 beta, 1 beta' and 1 omega subunit. When a sigma factor is associated with the core the holoenzyme is formed, which can initiate transcription.

The enzyme catalyses RNA(n) + a ribonucleoside 5'-triphosphate = RNA(n+1) + diphosphate. DNA-dependent RNA polymerase catalyzes the transcription of DNA into RNA using the four ribonucleoside triphosphates as substrates. This chain is DNA-directed RNA polymerase subunit beta, found in Nitrosococcus oceani (strain ATCC 19707 / BCRC 17464 / JCM 30415 / NCIMB 11848 / C-107).